A 197-amino-acid chain; its full sequence is 3-isopropylmalate dehydratase small subunit (197 aa).

This sequence belongs to the LeuD family. LeuD type 1 subfamily. As to quaternary structure, heterodimer of LeuC and LeuD.

It catalyses the reaction (2R,3S)-3-isopropylmalate = (2S)-2-isopropylmalate. It functions in the pathway amino-acid biosynthesis; L-leucine biosynthesis; L-leucine from 3-methyl-2-oxobutanoate: step 2/4. Its function is as follows. Catalyzes the isomerization between 2-isopropylmalate and 3-isopropylmalate, via the formation of 2-isopropylmaleate. This is 3-isopropylmalate dehydratase small subunit from Streptomyces avermitilis (strain ATCC 31267 / DSM 46492 / JCM 5070 / NBRC 14893 / NCIMB 12804 / NRRL 8165 / MA-4680).